The primary structure comprises 397 residues: 3-ketoacyl-CoA thiolase, mitochondrial (397 aa).

Residues 1 to 16 constitute a mitochondrion; not cleaved transit peptide; it reads MALLRGVFIVAAKRTP. Lys-25 carries the post-translational modification N6-acetyllysine; alternate. At Lys-25 the chain carries N6-succinyllysine; alternate. Lys-45 bears the N6-succinyllysine mark. Cys-92 functions as the Acyl-thioester intermediate in the catalytic mechanism. Thr-119 carries the phosphothreonine modification. Ser-121 carries the phosphoserine modification. Tyr-127 is subject to Phosphotyrosine. Thr-136 is subject to Phosphothreonine. An N6-acetyllysine; alternate mark is found at Lys-137, Lys-143, Lys-158, Lys-171, Lys-191, and Lys-209. Residues Lys-137, Lys-143, Lys-158, Lys-171, Lys-191, and Lys-209 each carry the N6-succinyllysine; alternate modification. N6-succinyllysine occurs at positions 211, 212, and 214. Residues Arg-224 and Thr-227 each coordinate CoA. Position 240 is an N6-succinyllysine (Lys-240). At Lys-241 the chain carries N6-acetyllysine. Ser-251 provides a ligand contact to CoA. 2 positions are modified to N6-acetyllysine: Lys-269 and Lys-270. Lys-305 is modified (N6-acetyllysine; alternate). An N6-succinyllysine; alternate modification is found at Lys-305. A Phosphoserine modification is found at Ser-310. The residue at position 312 (Lys-312) is an N6-acetyllysine; alternate. Position 312 is an N6-succinyllysine; alternate (Lys-312). Ser-333 is modified (phosphoserine). N6-acetyllysine is present on Lys-340. Residue Ser-344 is modified to Phosphoserine. Lys-375 is modified (N6-acetyllysine). Cys-382 acts as the Proton donor/acceptor in catalysis.

It belongs to the thiolase-like superfamily. Thiolase family. As to quaternary structure, homotetramer. Interacts with BNIP3. In terms of tissue distribution, expressed in liver, brown adipose tissue and heart (at protein level).

It is found in the mitochondrion. The enzyme catalyses an acyl-CoA + acetyl-CoA = a 3-oxoacyl-CoA + CoA. The catalysed reaction is 2 acetyl-CoA = acetoacetyl-CoA + CoA. It carries out the reaction acetyl-CoA + H2O = acetate + CoA + H(+). It catalyses the reaction propanoyl-CoA + H2O = propanoate + CoA + H(+). The enzyme catalyses butanoyl-CoA + H2O = butanoate + CoA + H(+). The catalysed reaction is hexanoyl-CoA + H2O = hexanoate + CoA + H(+). It carries out the reaction octanoyl-CoA + H2O = octanoate + CoA + H(+). It catalyses the reaction decanoyl-CoA + H2O = decanoate + CoA + H(+). The enzyme catalyses dodecanoyl-CoA + H2O = dodecanoate + CoA + H(+). The catalysed reaction is tetradecanoyl-CoA + H2O = tetradecanoate + CoA + H(+). It carries out the reaction hexadecanoyl-CoA + H2O = hexadecanoate + CoA + H(+). It functions in the pathway lipid metabolism; fatty acid beta-oxidation. With respect to regulation, the 3-oxoacetyl-CoA thiolase activity is inhibited by acetyl-CoA while the acetyl-CoA hydrolase activity is inhibited by acetoacetyl-CoA. In terms of biological role, in the production of energy from fats, this is one of the enzymes that catalyzes the last step of the mitochondrial beta-oxidation pathway, an aerobic process breaking down fatty acids into acetyl-CoA. Using free coenzyme A/CoA, catalyzes the thiolytic cleavage of medium- to long-chain unbranched 3-oxoacyl-CoAs into acetyl-CoA and a fatty acyl-CoA shortened by two carbon atoms. Also catalyzes the condensation of two acetyl-CoA molecules into acetoacetyl-CoA and could be involved in the production of ketone bodies. Also displays hydrolase activity on various fatty acyl-CoAs. Thereby, could be responsible for the production of acetate in a side reaction to beta-oxidation. Abolishes BNIP3-mediated apoptosis and mitochondrial damage. The chain is 3-ketoacyl-CoA thiolase, mitochondrial (Acaa2) from Rattus norvegicus (Rat).